A 257-amino-acid chain; its full sequence is Succinate dehydrogenase subunit 5, mitochondrial (257 aa).

The N-terminal 89 residues, 1 to 89, are a transit peptide targeting the mitochondrion; it reads MGTLGRAIHT…AMGMGQVRRF (89 aa).

Component of complex II composed of eight subunits in plants: four classical SDH subunits SDH1, SDH2, SDH3 and SDH4 (a flavoprotein (FP), an iron-sulfur protein (IP), and a cytochrome b composed of a large and a small subunit.), as well as four subunits unknown in mitochondria from bacteria and heterotrophic eukaryotes.

It is found in the mitochondrion inner membrane. It participates in carbohydrate metabolism; tricarboxylic acid cycle. The sequence is that of Succinate dehydrogenase subunit 5, mitochondrial from Arabidopsis thaliana (Mouse-ear cress).